Reading from the N-terminus, the 360-residue chain is Zinc finger protein ztf-2 (360 aa).

Residues 19–41 (LSSPEKEHRRKRRRGEVANPSNT) form a disordered region. 3 consecutive C2H2-type zinc fingers follow at residues 87 to 109 (RTCS…KRVH), 115 to 138 (FKCR…AKTH), and 180 to 203 (YRCQ…SHLH). Over residues 248-260 (PLSPCRSESSSDS) the composition is skewed to low complexity. The interval 248 to 272 (PLSPCRSESSSDSGIQTDPEEEASI) is disordered.

In terms of tissue distribution, expressed in pharyngeal epithelium/arcade, which connects the pharynx to the mouth.

Transcription factor. Represses gene expression, probably via binding to DNA consensus sequence 5'-[AT][CT]TTCC[AC][AG]-3' in promoter regions. May play a role in pharynx morphogenesis. This Caenorhabditis elegans protein is Zinc finger protein ztf-2.